Consider the following 178-residue polypeptide: MGSTFFGRPNVVGSSPPSSSPTSSSSSPATRRGKKNGSEKPKQPQRGLGVAQLEKIRLHGEMSCNSFNSYNPSLYPQEDVRMQGGYSSIPSQSSAPYGFYPNMMMGVHRDQYDRATMSWNPSYGILESQHSLEPNITRHFLNEDPSSTTRRSKSLGSGIQHSGSSENQEVDLELRLSL.

Disordered stretches follow at residues 1–48 (MGST…QRGL) and 139–178 (HFLN…RLSL). Residues 14-28 (SSPPSSSPTSSSSSP) are compositionally biased toward low complexity. Residues 46–54 (RGLGVAQLE) carry the SPL motif. Residues 144–167 (DPSSTTRRSKSLGSGIQHSGSSEN) show a composition bias toward polar residues. An EAR motif is present at residues 170–176 (VDLELRL).

Interacts with SPL and SPEAR2. In terms of tissue distribution, not detected in leaves.

Functionally, adapter-like transcriptional repressor recruiting TPL/TPR corepressors to inhibit TCP transcription factors. In Arabidopsis thaliana (Mouse-ear cress), this protein is Protein SPEAR1.